The following is a 268-amino-acid chain: Nickel import ATP-binding protein NikE (268 aa).

The ABC transporter domain occupies 4–252 (LNVCGLSHHY…SSDAGRVLQN (249 aa)). 45–52 (GRSGCGKS) contacts ATP.

Belongs to the ABC transporter superfamily. Nickel importer (TC 3.A.1.5.3) family. The complex is composed of two ATP-binding proteins (NikD and NikE), two transmembrane proteins (NikB and NikC) and a solute-binding protein (NikA).

The protein resides in the cell inner membrane. It carries out the reaction Ni(2+)(out) + ATP + H2O = Ni(2+)(in) + ADP + phosphate + H(+). Part of the ABC transporter complex NikABCDE involved in nickel import. Responsible for energy coupling to the transport system. The chain is Nickel import ATP-binding protein NikE from Shigella flexneri.